A 1080-amino-acid polypeptide reads, in one-letter code: AP-4 complex subunit epsilon (1080 aa).

HEAT repeat units follow at residues 161–198, 201–238, 369–405, 406–443, and 445–479; these read DTIP…LVGD, LDDD…KHST, QLIE…KVSP, KLVL…QTNV, and PVCS…KYSP. Disordered stretches follow at residues 711–782, 801–920, 933–973, and 996–1027; these read TPLV…FPQQ, NNNS…NIDP, FSEN…INNN, and TNNS…NNNL. Low complexity-rich tracts occupy residues 762–782, 801–847, 878–911, 936–952, and 962–972; these read QQQQ…FPQQ, NNNS…PNNQ, NKQT…IQKH, NNNR…NQNN, and KKSNNENNINN.

This sequence belongs to the adaptor complexes large subunit family. May be part of the adaptor protein complex 4 (AP-4), a heterotetramer composed of two large adaptins (epsilon-type subunitand beta-type subunit), a medium adaptin (mu-type subunit) and a small adaptin (sigma-type).

The protein resides in the golgi apparatus. It localises to the trans-Golgi network membrane. In terms of biological role, probable component of an adaptor protein complex. Adaptor protein complexes are vesicle coat components involved both in vesicle formation and cargo selection. They control the vesicular transport of proteins in different trafficking pathways. This Dictyostelium discoideum (Social amoeba) protein is AP-4 complex subunit epsilon.